Here is a 493-residue protein sequence, read N- to C-terminus: WAS/WASL-interacting protein family member 1 (493 aa).

Residues M1 to T14 are compositionally biased toward pro residues. The segment at M1–R493 is disordered. Residues E21–A31 show a composition bias toward polar residues. The WH2 domain maps to G32 to T49. An Asymmetric dimethylarginine modification is found at R33. Residues K45–K48 form a binds actin region. Residues A67 to F105 show a composition bias toward gly residues. 2 positions are modified to omega-N-methylarginine: R126 and R135. Composition is skewed to pro residues over residues F142–S155, P162–P175, and S183–V195. The residue at position 143 (S143) is a Phosphoserine. S227 carries the post-translational modification Phosphoserine. 3 stretches are compositionally biased toward pro residues: residues F239–P248, V274–P290, and A298–P315. S330 and S340 each carry phosphoserine. Over residues P336–D361 the composition is skewed to pro residues. 3 XRSGPXPPXP motif repeats span residues G342–P351, G364–P373, and P400–P409. Positions G403–S424 are enriched in pro residues. Residues T425 to S434 are compositionally biased toward polar residues. Over residues A470 to G484 the composition is skewed to basic and acidic residues.

This sequence belongs to the verprolin family. As to quaternary structure, binds to WAS within the N-terminal region, at a site distinct from the CDC42-binding site. Binds profilin and actin. Binds to WASL. Interacts with DBNL. Interacts with DBNL. Interacts with FNBP1L (via the SH3 domain).

Its subcellular location is the cytoplasmic vesicle. It is found in the cytoplasm. It localises to the cytoskeleton. The protein localises to the cell projection. The protein resides in the ruffle. Its function is as follows. Plays a role in the reorganization of the actin cytoskeleton. Contributes with NCK1 and GRB2 in the recruitment and activation of WASL. May participate in regulating the subcellular localization of WASL, resulting in the disassembly of stress fibers in favor of filopodia formation. Plays a role in the formation of cell ruffles. This Mus musculus (Mouse) protein is WAS/WASL-interacting protein family member 1 (Wipf1).